Consider the following 451-residue polypeptide: 3-phosphoshikimate 1-carboxyvinyltransferase (451 aa).

Positions 30, 31, and 35 each coordinate 3-phosphoshikimate. K30 contributes to the phosphoenolpyruvate binding site. The phosphoenolpyruvate site is built by G103 and R131. Residues S176, Q178, D329, and K356 each contribute to the 3-phosphoshikimate site. Q178 contributes to the phosphoenolpyruvate binding site. The Proton acceptor role is filled by D329. Residues R360 and R404 each coordinate phosphoenolpyruvate.

It belongs to the EPSP synthase family. In terms of assembly, monomer.

Its subcellular location is the cytoplasm. The enzyme catalyses 3-phosphoshikimate + phosphoenolpyruvate = 5-O-(1-carboxyvinyl)-3-phosphoshikimate + phosphate. It functions in the pathway metabolic intermediate biosynthesis; chorismate biosynthesis; chorismate from D-erythrose 4-phosphate and phosphoenolpyruvate: step 6/7. Catalyzes the transfer of the enolpyruvyl moiety of phosphoenolpyruvate (PEP) to the 5-hydroxyl of shikimate-3-phosphate (S3P) to produce enolpyruvyl shikimate-3-phosphate and inorganic phosphate. In Parvibaculum lavamentivorans (strain DS-1 / DSM 13023 / NCIMB 13966), this protein is 3-phosphoshikimate 1-carboxyvinyltransferase.